Here is a 929-residue protein sequence, read N- to C-terminus: Diacylglycerol kinase zeta (929 aa).

Over residues 1-14 (MEPRDPSPEARSSD) the composition is skewed to basic and acidic residues. Disordered regions lie at residues 1 to 46 (MEPR…RRFP) and 59 to 80 (KSGL…GESE). Residues 15–24 (SESASASSSG) show a composition bias toward low complexity. The segment covering 25-37 (SERDADPEPDKAP) has biased composition (basic and acidic residues). 2 Phorbol-ester/DAG-type zinc fingers span residues 98 to 153 (HIWF…NFRC) and 173 to 231 (HHWV…EEPC). Positions 257–281 (KASKKKKRASFKRRSSKKGPEEGRW) are disordered. Residues 258–273 (ASKKKKRASFKRRSSK) are compositionally biased toward basic residues. The segment at 279 to 417 (GRWRPFIIRP…HVEEGNVVQL (139 aa)) is mediates interaction with RASGRP1. The DAGKc domain maps to 292 to 426 (PLMKPLLVFV…LDRWDLRAEP (135 aa)). A Nuclear export signal motif is present at residues 362-370 (LSTLDQLRL). The disordered stretch occupies residues 421–441 (DLRAEPNPEAGPEERDDGATD). At Ser706 the chain carries Phosphoserine. Residues 760–783 (ARPDLPTPTSPLPASPCSPTPGSL) are disordered. Residues 764-778 (LPTPTSPLPASPCSP) are compositionally biased toward pro residues. Residue Ser782 is modified to Phosphoserine. 2 ANK repeats span residues 823 to 853 (QSRT…EILD) and 858 to 887 (NGET…SLMK). The short motif at 925–929 (QETAV) is the PDZ-binding element.

It belongs to the eukaryotic diacylglycerol kinase family. In terms of assembly, interacts (via PDZ-binding motif) with the PDZ domain of the syntrophin SNTG1 and that of SNX27. Interacts with IRS1 in the absence of insulin; insulin stimulation decreases this interaction. Found in a ternary complex with IRS1 and PIP5K1A in the absence of insulin. Interacts with PIP5K1A. Forms a signaling complex with RASGRP1 and HRAS.

The protein localises to the nucleus. Its subcellular location is the cytoplasm. It is found in the cytosol. It localises to the cell membrane. The protein resides in the cell projection. The protein localises to the lamellipodium. It carries out the reaction a 1,2-diacyl-sn-glycerol + ATP = a 1,2-diacyl-sn-glycero-3-phosphate + ADP + H(+). The catalysed reaction is a 1-O-alkyl-sn-glycerol + ATP = a 1-O-alkyl-sn-glycero-3-phosphate + ADP + H(+). The enzyme catalyses 1-O-alkyl-2-acyl-sn-glycerol + ATP = 1-O-alkyl-2-acyl-sn-glycero-3-phosphate + ADP + H(+). It catalyses the reaction 1,2-didecanoyl-sn-glycerol + ATP = 1,2-didecanoyl-sn-glycero-3-phosphate + ADP + H(+). It carries out the reaction 1,2-ditetradecanoyl-sn-glycerol + ATP = 1,2-ditetradecanoyl-sn-glycero-3-phosphate + ADP + H(+). The catalysed reaction is 1-hexadecanoyl-2-(9Z-octadecenoyl)-sn-glycerol + ATP = 1-hexadecanoyl-2-(9Z-octadecenoyl)-sn-glycero-3-phosphate + ADP + H(+). The enzyme catalyses 1-hexadecanoyl-2-(5Z,8Z,11Z,14Z-eicosatetraenoyl)-sn-glycerol + ATP = 1-hexadecanoyl-2-(5Z,8Z,11Z,14Z-eicosatetraenoyl)-sn-glycero-3-phosphate + ADP + H(+). It catalyses the reaction 1-octadecanoyl-2-(9Z-octadecenoyl)-sn-glycerol + ATP = 1-octadecanoyl-2-(9Z-octadecenoyl)-sn-glycero-3-phosphate + ADP + H(+). It carries out the reaction 1-octadecanoyl-2-(5Z,8Z,11Z,14Z-eicosatetraenoyl)-sn-glycerol + ATP = 1-octadecanoyl-2-(5Z,8Z,11Z,14Z-eicosatetraenoyl)-sn-glycero-3-phosphate + ADP + H(+). The catalysed reaction is 1-octadecanoyl-2-(4Z,7Z,10Z,13Z,16Z,19Z-docosahexaenoyl)-sn-glycerol + ATP = 1-octadecanoyl-2-(4Z,7Z,10Z,13Z,16Z,19Z-docosahexaenoyl)-sn-glycero-3-phosphate + ADP + H(+). The enzyme catalyses 1,2-di-(9Z-octadecenoyl)-sn-glycerol + ATP = 1,2-di-(9Z-octadecenoyl)-sn-glycero-3-phosphate + ADP + H(+). It catalyses the reaction 1-(9Z-octadecenoyl)-2-hexadecanoyl-sn-glycerol + ATP = 1-(9Z)-octadecenoyl-2-hexadecanoyl-sn-glycero-3-phosphate + ADP + H(+). It carries out the reaction 1-eicosanoyl-2-(5Z,8Z,11Z,14Z)-eicosatetraenoyl-sn-glycerol + ATP = 1-eicosanoyl-2-(5Z,8Z,11Z,14Z)-eicosatetraenoyl-sn-glycero-3-phosphate + ADP + H(+). The catalysed reaction is 1,2-di-(5Z,8Z,11Z,14Z)-eicosatetraenoyl-sn-glycerol + ATP = 1,2-di-(5Z,8Z,11Z,14Z)-eicosatetraenoyl-sn-glycero-3-phosphate + ADP + H(+). The enzyme catalyses 1-O-hexadecyl-2-acetyl-sn-glycerol + ATP = 1-O-hexadecyl-2-acetyl-sn-glycero-3-phosphate + ADP + H(+). It catalyses the reaction 1-O-hexadecyl-2-(5Z,8Z,11Z,14Z-eicosatetraenoyl)-sn-glycerol + ATP = 1-O-hexadecyl-2-(5Z,8Z,11Z,14Z-eicosatetraenoyl)-sn-glycero-3-phosphate + ADP + H(+). It carries out the reaction 1-O-hexadecyl-2-(9Z-octadecenoyl)-sn-glycerol + ATP = 1-O-hexadecyl-2-(9Z-octadecenoyl)-sn-glycero-3-phosphate + ADP + H(+). The catalysed reaction is 1-O-hexadecyl-sn-glycerol + ATP = 1-O-hexadecyl-sn-glycero-3-phosphate + ADP + H(+). The protein operates within lipid metabolism; glycerolipid metabolism. Functionally, diacylglycerol kinase that converts diacylglycerol/DAG into phosphatidic acid/phosphatidate/PA and regulates the respective levels of these two bioactive lipids. Thereby, acts as a central switch between the signaling pathways activated by these second messengers with different cellular targets and opposite effects in numerous biological processes. Also plays an important role in the biosynthesis of complex lipids. Does not exhibit an acyl chain-dependent substrate specificity among diacylglycerol species. Can also phosphorylate 1-alkyl-2-acylglycerol in vitro but less efficiently and with a preference for alkylacylglycerols containing an arachidonoyl group. The biological processes it is involved in include T cell activation since it negatively regulates T-cell receptor signaling which is in part mediated by diacylglycerol. By generating phosphatidic acid, stimulates PIP5KIA activity which regulates actin polymerization. Through the same mechanism could also positively regulate insulin-induced translocation of SLC2A4 to the cell membrane. Regulates RASGRP1 activity. This chain is Diacylglycerol kinase zeta, found in Rattus norvegicus (Rat).